The sequence spans 420 residues: Transcription factor TCP4 (420 aa).

The tract at residues 1–27 is disordered; it reads MSDDQFHHPPPPSSMRHRSTSDAADGG. Residues 45 to 103 form the TCP domain; the sequence is RKDRHSKVCTAKGPRDRRVRLSAHTAIQFYDVQDRLGFDRPSKAVDWLIKKAKTSIDEL. Disordered stretches follow at residues 121-176, 228-256, 353-379, and 399-420; these read NAKP…PSMD, LSLQSFPDGPPSLLHHQHHHHTSASASEP, HQSISTDDLNHHHHLPPPVHQSAIPGI, and QEEEQHDGLTHKPSSASSISRH. A compositionally biased stretch (polar residues) spans 410-420; sequence KPSSASSISRH.

Interacts with AHL27 and AHL29. Interacts with SPL. Interacts with JGB. Interacts with GI (via N-terminus). Expressed in cotyledons, particularly in the vascular region, in leaves, roots, buds, flowers and immature siliques.

It localises to the nucleus. Transcription factor playing a pivotal role in the control of morphogenesis of shoot organs by negatively regulating the expression of boundary-specific genes such as CUC genes, probably through the induction of miRNA (e.g. miR164). Required during early steps of embryogenesis. Participates in ovule development. Activates LOX2 expression by binding to the 5'-GGACCA-3' motif found in its promoter. Activates YUC5 transcription by binding to the 5'-GTGGGCCA-3' motif found in its promoter. Through the activation of YUC5 transcription, integrates the auxin response to a brassinosteroid-dependent molecular circuit that promotes cell elongation in hypocotyls. Activates GIS transcription by binding to the 5'-TGGTCC-3' motif found in its promoter. Involved in the regulation of trichome branching through the activation of GIS transcription. Activates CO transcription by binding to the 5'-GGACCAC-3' motif found in its promoter. Involved in the regulation of photoperiodic flowering through the activation of CO transcription. Activates TCL1 and TCL2 transcription by binding to the 5'-TGGCCA-3' and 5'-GTGGACCA-3' motifS found in their respective promoters. Involved in the suppression of trichome initiaition through the activation of TCL1 and TCL2 transcription. Activates HAT2 transcription by binding to the 5'-TGGTCCAC-3' motif found in its promoter. Through the activation of HAT2 transcription, involved in the auxin-independent reprogramming of mitotic cells to exit division and acquire differentiation competence within the transition zone. This Arabidopsis thaliana (Mouse-ear cress) protein is Transcription factor TCP4 (TCP4).